We begin with the raw amino-acid sequence, 811 residues long: N-terminal acetyltransferase B complex subunit arm1 (811 aa).

This sequence belongs to the MDM20/NAA25 family. In terms of assembly, component of the N-terminal acetyltransferase B (NatB) complex.

It is found in the cytoplasm. Functionally, non-catalytic subunit of the NatB N-terminal acetyltransferase, which catalyzes acetylation of the amino-terminal methionine residues of all proteins beginning with Met-Asp or Met-Glu and of some proteins beginning with Met-Asn or Met-Met. This chain is N-terminal acetyltransferase B complex subunit arm1 (arm1), found in Schizosaccharomyces pombe (strain 972 / ATCC 24843) (Fission yeast).